A 126-amino-acid polypeptide reads, in one-letter code: Large ribosomal subunit protein bL12 (126 aa).

It belongs to the bacterial ribosomal protein bL12 family. In terms of assembly, homodimer. Part of the ribosomal stalk of the 50S ribosomal subunit. Forms a multimeric L10(L12)X complex, where L10 forms an elongated spine to which 2 to 4 L12 dimers bind in a sequential fashion. Binds GTP-bound translation factors.

Forms part of the ribosomal stalk which helps the ribosome interact with GTP-bound translation factors. Is thus essential for accurate translation. This Elusimicrobium minutum (strain Pei191) protein is Large ribosomal subunit protein bL12.